Consider the following 391-residue polypeptide: Probable inactive allantoicase (391 aa).

Belongs to the allantoicase family.

Its function is as follows. The function of this enzyme is unclear as allantoicase activity is not known to exist in mammals. This Homo sapiens (Human) protein is Probable inactive allantoicase.